The sequence spans 101 residues: Small ribosomal subunit protein bS21 (101 aa).

A compositionally biased stretch (basic and acidic residues) spans 36-52; sequence YEKPSEKKAREKAEAVR. The interval 36-101 is disordered; sequence YEKPSEKKAR…GPGAGPRGPR (66 aa). Over residues 53-62 the composition is skewed to basic residues; that stretch reads RARKLARKKL. Gly residues predominate over residues 83–101; that stretch reads PGAGGPGAGGPGAGPRGPR.

Belongs to the bacterial ribosomal protein bS21 family.

The chain is Small ribosomal subunit protein bS21 from Rhodopseudomonas palustris (strain HaA2).